Consider the following 696-residue polypeptide: UvrABC system protein C (696 aa).

Residues 16–95 (TEPGVYKFRD…IKRFDPRFNV (80 aa)) enclose the GIY-YIG domain. Residues 208–243 (DKVTRKLNADMMAAAEELDFERAARLRDDLEAIDKV) form the UVR domain.

Belongs to the UvrC family. As to quaternary structure, interacts with UvrB in an incision complex.

It localises to the cytoplasm. In terms of biological role, the UvrABC repair system catalyzes the recognition and processing of DNA lesions. UvrC both incises the 5' and 3' sides of the lesion. The N-terminal half is responsible for the 3' incision and the C-terminal half is responsible for the 5' incision. This Corynebacterium glutamicum (strain ATCC 13032 / DSM 20300 / JCM 1318 / BCRC 11384 / CCUG 27702 / LMG 3730 / NBRC 12168 / NCIMB 10025 / NRRL B-2784 / 534) protein is UvrABC system protein C.